The chain runs to 490 residues: Glutamyl-tRNA(Gln) amidotransferase subunit A (490 aa).

Active-site charge relay system residues include K78 and S153. The active-site Acyl-ester intermediate is the S177.

The protein belongs to the amidase family. GatA subfamily. As to quaternary structure, heterotrimer of A, B and C subunits.

It carries out the reaction L-glutamyl-tRNA(Gln) + L-glutamine + ATP + H2O = L-glutaminyl-tRNA(Gln) + L-glutamate + ADP + phosphate + H(+). In terms of biological role, allows the formation of correctly charged Gln-tRNA(Gln) through the transamidation of misacylated Glu-tRNA(Gln) in organisms which lack glutaminyl-tRNA synthetase. The reaction takes place in the presence of glutamine and ATP through an activated gamma-phospho-Glu-tRNA(Gln). The chain is Glutamyl-tRNA(Gln) amidotransferase subunit A from Bdellovibrio bacteriovorus (strain ATCC 15356 / DSM 50701 / NCIMB 9529 / HD100).